Reading from the N-terminus, the 157-residue chain is Small ribosomal subunit protein uS7 (157 aa).

It belongs to the universal ribosomal protein uS7 family. Part of the 30S ribosomal subunit. Contacts proteins S9 and S11.

Its function is as follows. One of the primary rRNA binding proteins, it binds directly to 16S rRNA where it nucleates assembly of the head domain of the 30S subunit. Is located at the subunit interface close to the decoding center, probably blocks exit of the E-site tRNA. The sequence is that of Small ribosomal subunit protein uS7 from Chlamydia muridarum (strain MoPn / Nigg).